The primary structure comprises 677 residues: MNFELTSAYKPTGDQPEAIAQLTEGVLEGVPAQTLLGVTGSGKTFTIANVIANINKPTLILSHNKTLAAQLYSEFKGFFPNNAVEYYVSYYDYYQPEAYLPSSDTYIEKDLAINDEIDKLRLAATSALLSGRKDVVVVSSVSCIYGMGNPSDFYNNVIEIERGRTINRNVFLRRLVDSLYMRNDIELNRGNFRVKGDTVDIYLAYSDNLLRVTFWGDEIDGIEEVDPVSGVTIAPFEAYKIYPANLFMTTKEATLRAIHEIEDDLTKQVAYFESIGKEYEAKRLYERVTYDMEMIRELGHCSGIENYSRYFDGRAAGTRPYCLLDFFPDDFLIVIDESHVSVPQIRAMYGGDRARKINLVEYGFRLPAAMDNRPLKFEEFESMAKQVIYVSATPADYELVQSEGIVVEQVIRPTGLLDPVIEVRPSLNQIDDLMEEIQIRIEKEERILVTTLTKRMAEELTEYLLNNNVRCNYIHSDVDTLERVKIMDDLRQGVYDVLIGVNLLREGLDLPEVSLVAILDADKEGFLRSHRSLTQTAGRAARNVNGMVIMYADKITDSMRLTIDETNRRREKQLAYNEEHGITPQQIKKARNLSVFGNGAETEDTQKGTRAYVEPSSPNIAADPVVQYMSKTQLEKSMERTRKLMQEAAKKLEFIEAAQYRDELLKMEDLMKEKWPG.

Residues 24–412 (EGVLEGVPAQ…EGIVVEQVIR (389 aa)) form the Helicase ATP-binding domain. 37 to 44 (GVTGSGKT) contributes to the ATP binding site. A Beta-hairpin motif is present at residues 90-113 (YYDYYQPEAYLPSSDTYIEKDLAI). The 163-residue stretch at 429–591 (QIDDLMEEIQ…ITPQQIKKAR (163 aa)) folds into the Helicase C-terminal domain. One can recognise a UVR domain in the interval 635 to 670 (EKSMERTRKLMQEAAKKLEFIEAAQYRDELLKMEDL).

It belongs to the UvrB family. As to quaternary structure, forms a heterotetramer with UvrA during the search for lesions. Interacts with UvrC in an incision complex.

The protein localises to the cytoplasm. In terms of biological role, the UvrABC repair system catalyzes the recognition and processing of DNA lesions. A damage recognition complex composed of 2 UvrA and 2 UvrB subunits scans DNA for abnormalities. Upon binding of the UvrA(2)B(2) complex to a putative damaged site, the DNA wraps around one UvrB monomer. DNA wrap is dependent on ATP binding by UvrB and probably causes local melting of the DNA helix, facilitating insertion of UvrB beta-hairpin between the DNA strands. Then UvrB probes one DNA strand for the presence of a lesion. If a lesion is found the UvrA subunits dissociate and the UvrB-DNA preincision complex is formed. This complex is subsequently bound by UvrC and the second UvrB is released. If no lesion is found, the DNA wraps around the other UvrB subunit that will check the other stand for damage. This Bacteroides fragilis (strain YCH46) protein is UvrABC system protein B.